A 164-amino-acid polypeptide reads, in one-letter code: Transcriptional regulator MraZ (164 aa).

SpoVT-AbrB domains are found at residues 7–60 (HYTN…EIDG) and 83–126 (SEIL…EPGR). Residues 144–164 (QLSARHAAPDAPPLRSHGARE) are disordered.

This sequence belongs to the MraZ family. As to quaternary structure, forms oligomers.

The protein localises to the cytoplasm. The protein resides in the nucleoid. The protein is Transcriptional regulator MraZ of Methylocella silvestris (strain DSM 15510 / CIP 108128 / LMG 27833 / NCIMB 13906 / BL2).